Reading from the N-terminus, the 333-residue chain is Ketol-acid reductoisomerase (NAD(P)(+)) (333 aa).

Positions 2–182 constitute a KARI N-terminal Rossmann domain; that stretch reads AKIYYDEDAS…GATRAGVIET (181 aa). NADP(+) contacts are provided by residues 25–28, serine 51, and 83–86; these read YGSQ and DTVQ. The active site involves histidine 108. An NADP(+)-binding site is contributed by glycine 134. Positions 183-327 constitute a KARI C-terminal knotted domain; the sequence is TFREETETDL…KELRQMMPWL (145 aa). Residues aspartate 191, glutamate 195, glutamate 227, and glutamate 231 each contribute to the Mg(2+) site. Serine 252 serves as a coordination point for substrate.

This sequence belongs to the ketol-acid reductoisomerase family. The cofactor is Mg(2+).

It carries out the reaction (2R)-2,3-dihydroxy-3-methylbutanoate + NAD(+) = (2S)-2-acetolactate + NADH + H(+). It catalyses the reaction (2R)-2,3-dihydroxy-3-methylbutanoate + NADP(+) = (2S)-2-acetolactate + NADPH + H(+). It functions in the pathway amino-acid biosynthesis; L-isoleucine biosynthesis; L-isoleucine from 2-oxobutanoate: step 2/4. It participates in amino-acid biosynthesis; L-valine biosynthesis; L-valine from pyruvate: step 2/4. In terms of biological role, involved in the biosynthesis of branched-chain amino acids (BCAA). Catalyzes an alkyl-migration followed by a ketol-acid reduction of (S)-2-acetolactate (S2AL) to yield (R)-2,3-dihydroxy-isovalerate. In the isomerase reaction, S2AL is rearranged via a Mg-dependent methyl migration to produce 3-hydroxy-3-methyl-2-ketobutyrate (HMKB). In the reductase reaction, this 2-ketoacid undergoes a metal-dependent reduction by NADPH or NADH to yield (R)-2,3-dihydroxy-isovalerate. This Hydrogenobaculum sp. (strain Y04AAS1) protein is Ketol-acid reductoisomerase (NAD(P)(+)).